Here is a 190-residue protein sequence, read N- to C-terminus: Peptidyl-tRNA hydrolase (190 aa).

Tyrosine 14 is a binding site for tRNA. The active-site Proton acceptor is histidine 19. Positions 64, 66, and 112 each coordinate tRNA.

It belongs to the PTH family. In terms of assembly, monomer.

Its subcellular location is the cytoplasm. It catalyses the reaction an N-acyl-L-alpha-aminoacyl-tRNA + H2O = an N-acyl-L-amino acid + a tRNA + H(+). Functionally, hydrolyzes ribosome-free peptidyl-tRNAs (with 1 or more amino acids incorporated), which drop off the ribosome during protein synthesis, or as a result of ribosome stalling. Catalyzes the release of premature peptidyl moieties from peptidyl-tRNA molecules trapped in stalled 50S ribosomal subunits, and thus maintains levels of free tRNAs and 50S ribosomes. This is Peptidyl-tRNA hydrolase from Chlorobaculum parvum (strain DSM 263 / NCIMB 8327) (Chlorobium vibrioforme subsp. thiosulfatophilum).